Reading from the N-terminus, the 466-residue chain is Ribosomal protein uS12 methylthiotransferase RimO (466 aa).

In terms of domain architecture, MTTase N-terminal spans 15 to 125 (PKVGFVSLGC…VMEAVHAALP (111 aa)). [4Fe-4S] cluster-binding residues include Cys24, Cys60, Cys89, Cys156, Cys160, and Cys163. The region spanning 142 to 380 (LTPRHYAYLK…AKQAEISALR (239 aa)) is the Radical SAM core domain. The TRAM domain occupies 382–450 (EAKIGSVQQC…EHDLFGDALP (69 aa)).

It belongs to the methylthiotransferase family. RimO subfamily. [4Fe-4S] cluster serves as cofactor.

Its subcellular location is the cytoplasm. The catalysed reaction is L-aspartate(89)-[ribosomal protein uS12]-hydrogen + (sulfur carrier)-SH + AH2 + 2 S-adenosyl-L-methionine = 3-methylsulfanyl-L-aspartate(89)-[ribosomal protein uS12]-hydrogen + (sulfur carrier)-H + 5'-deoxyadenosine + L-methionine + A + S-adenosyl-L-homocysteine + 2 H(+). Catalyzes the methylthiolation of an aspartic acid residue of ribosomal protein uS12. The chain is Ribosomal protein uS12 methylthiotransferase RimO from Xanthomonas oryzae pv. oryzae (strain MAFF 311018).